The following is a 257-amino-acid chain: Metallo-beta-lactamase type 2 (257 aa).

An N-terminal signal peptide occupies residues 1–30 (MKKNTLLKVGLCVSLLGTTQFVSTISSVQA). Histidine 116, histidine 118, aspartate 120, histidine 179, and cysteine 198 together coordinate Zn(2+). The substrate site is built by lysine 201 and asparagine 210. Position 240 (histidine 240) interacts with Zn(2+).

It belongs to the metallo-beta-lactamase superfamily. Class-B beta-lactamase family. As to quaternary structure, monomer. Zn(2+) is required as a cofactor.

It localises to the periplasm. It carries out the reaction a beta-lactam + H2O = a substituted beta-amino acid. In terms of biological role, confers resistance to the different beta-lactams antibiotics (penicillin, cephalosporin and carbapenem) via the hydrolysis of the beta-lactam ring. The polypeptide is Metallo-beta-lactamase type 2 (Bacillus sp. (strain 170)).